The sequence spans 244 residues: Ribosomal RNA large subunit methyltransferase E (244 aa).

Residues 1 to 23 are disordered; it reads MATGGKKSAGRTTGSGPAGGSRN. Residues G91, W93, D116, D132, and D156 each contribute to the S-adenosyl-L-methionine site. The active-site Proton acceptor is K196.

Belongs to the class I-like SAM-binding methyltransferase superfamily. RNA methyltransferase RlmE family.

It localises to the cytoplasm. The catalysed reaction is uridine(2552) in 23S rRNA + S-adenosyl-L-methionine = 2'-O-methyluridine(2552) in 23S rRNA + S-adenosyl-L-homocysteine + H(+). Its function is as follows. Specifically methylates the uridine in position 2552 of 23S rRNA at the 2'-O position of the ribose in the fully assembled 50S ribosomal subunit. In Paramagnetospirillum magneticum (strain ATCC 700264 / AMB-1) (Magnetospirillum magneticum), this protein is Ribosomal RNA large subunit methyltransferase E.